Here is a 123-residue protein sequence, read N- to C-terminus: Protein Wnt-7b (123 aa).

Ser1 carries O-palmitoleoyl serine; by PORCN lipidation. The tract at residues 33 to 61 (VEAVRATRLRQPTFLKIKKPRTYRKPMVT) is disordered linker. Cys89 and Cys104 are joined by a disulfide. N-linked (GlcNAc...) asparagine glycosylation occurs at Asn90.

The protein belongs to the Wnt family. Post-translationally, palmitoleoylation is required for efficient binding to frizzled receptors. Depalmitoleoylation leads to Wnt signaling pathway inhibition.

Its subcellular location is the secreted. The protein resides in the extracellular space. It localises to the extracellular matrix. Functionally, ligand for members of the frizzled family of seven transmembrane receptors that functions in the canonical Wnt/beta-catenin signaling pathway. Required for normal fusion of the chorion and the allantois during placenta development. Required for central nervous system (CNS) angiogenesis and blood-brain barrier regulation. In Alopias vulpinus (Common thresher shark), this protein is Protein Wnt-7b (WNT-7B).